Reading from the N-terminus, the 236-residue chain is UPF0257 lipoprotein YnfC (236 aa).

Positions 1–16 (MKYKLLPCLLAIFLTG) are cleaved as a signal peptide. Residue cysteine 17 is the site of N-palmitoyl cysteine attachment. Cysteine 17 carries the S-diacylglycerol cysteine lipid modification.

It belongs to the UPF0257 family.

The protein resides in the cell membrane. The polypeptide is UPF0257 lipoprotein YnfC (Escherichia coli O7:K1 (strain IAI39 / ExPEC)).